The sequence spans 447 residues: MSMTPREIVHELNRHIIGQDDAKRAVAIALRNRWRRMQLPAELRAEVTPKNILMIGPTGVGKTEIARRLAKLANAPFLKVEATKFTEVGYVGRDVESIIRDLADAAMKMLREQEIIRVRHRAEDAAEDRILDALLPQARVTSFSEEAAQTSSDSNTRQLFRKRLREGQLDDKEIEIEVADAVGVEIAAPPGMEEMTNQLQSLFANMGKGKRKARKLKVKEALKMVRDEEASRLVNDDDLKAKALEAVEQHGIVFIDEIDKVAKRGNVGGADVSREGVQRDLLPLIEGCTVNTKLGMVKTDHILFIASGAFHLSKPSDLVPELQGRLPIRVELKALTPEDFERILQEPHASLTEQYRELLKTEGLNIEFKADGIKRLAEIAYQVNEKTENIGARRLHTLLERLLEEVSFSAGDLASAHDEAPIQIDAAYVNGHLGELAQNEDLSRYIL.

Residues Ile-17, 59 to 64, Asp-256, Glu-321, and Arg-393 each bind ATP; that span reads GVGKTE.

It belongs to the ClpX chaperone family. HslU subfamily. In terms of assembly, a double ring-shaped homohexamer of HslV is capped on each side by a ring-shaped HslU homohexamer. The assembly of the HslU/HslV complex is dependent on binding of ATP.

The protein localises to the cytoplasm. ATPase subunit of a proteasome-like degradation complex; this subunit has chaperone activity. The binding of ATP and its subsequent hydrolysis by HslU are essential for unfolding of protein substrates subsequently hydrolyzed by HslV. HslU recognizes the N-terminal part of its protein substrates and unfolds these before they are guided to HslV for hydrolysis. In Pseudomonas putida (strain W619), this protein is ATP-dependent protease ATPase subunit HslU.